The primary structure comprises 298 residues: Aspartate carbamoyltransferase catalytic subunit (298 aa).

Positions 50 and 51 each coordinate carbamoyl phosphate. Lys-79 lines the L-aspartate pocket. Carbamoyl phosphate-binding residues include Arg-100, His-128, and Gln-131. L-aspartate contacts are provided by Arg-160 and Arg-221. Carbamoyl phosphate-binding residues include Leu-260 and Pro-261.

The protein belongs to the aspartate/ornithine carbamoyltransferase superfamily. ATCase family. Heterooligomer of catalytic and regulatory chains.

The catalysed reaction is carbamoyl phosphate + L-aspartate = N-carbamoyl-L-aspartate + phosphate + H(+). It functions in the pathway pyrimidine metabolism; UMP biosynthesis via de novo pathway; (S)-dihydroorotate from bicarbonate: step 2/3. Catalyzes the condensation of carbamoyl phosphate and aspartate to form carbamoyl aspartate and inorganic phosphate, the committed step in the de novo pyrimidine nucleotide biosynthesis pathway. The chain is Aspartate carbamoyltransferase catalytic subunit from Methanosphaerula palustris (strain ATCC BAA-1556 / DSM 19958 / E1-9c).